The primary structure comprises 1070 residues: DNA-directed RNA polymerase subunit beta (1070 aa).

This sequence belongs to the RNA polymerase beta chain family. As to quaternary structure, in plastids the minimal PEP RNA polymerase catalytic core is composed of four subunits: alpha, beta, beta', and beta''. When a (nuclear-encoded) sigma factor is associated with the core the holoenzyme is formed, which can initiate transcription.

Its subcellular location is the plastid. It localises to the chloroplast. It carries out the reaction RNA(n) + a ribonucleoside 5'-triphosphate = RNA(n+1) + diphosphate. In terms of biological role, DNA-dependent RNA polymerase catalyzes the transcription of DNA into RNA using the four ribonucleoside triphosphates as substrates. This Populus trichocarpa (Western balsam poplar) protein is DNA-directed RNA polymerase subunit beta.